We begin with the raw amino-acid sequence, 43 residues long: uncharacterized protein (43 aa).

Belongs to the ELIP/psbS family.

The protein resides in the plastid. Its subcellular location is the chloroplast. Possible role in chlorophyll and/or carotenoid binding. This is an uncharacterized protein from Cyanidium caldarium (Red alga).